The chain runs to 228 residues: tRNA (carboxymethyluridine(34)-5-O)-methyltransferase (228 aa).

It localises to the cytoplasm. The protein resides in the nucleus. The enzyme catalyses 5-(carboxymethyl)uridine(34) in tRNA + S-adenosyl-L-methionine = 5-(2-methoxy-2-oxoethyl)uridine(34) in tRNA + S-adenosyl-L-homocysteine. Its function is as follows. Required for the methylation of the wobble bases at position 34 in tRNA. Appears to have a role in stress-response. The sequence is that of tRNA (carboxymethyluridine(34)-5-O)-methyltransferase (trm9) from Schizosaccharomyces pombe (strain 972 / ATCC 24843) (Fission yeast).